The chain runs to 201 residues: FMN-dependent NADH:quinone oxidoreductase (201 aa).

FMN contacts are provided by residues 92 to 95 (MWNL) and 136 to 139 (STGG).

This sequence belongs to the azoreductase type 1 family. As to quaternary structure, homodimer. FMN serves as cofactor.

The catalysed reaction is 2 a quinone + NADH + H(+) = 2 a 1,4-benzosemiquinone + NAD(+). It carries out the reaction N,N-dimethyl-1,4-phenylenediamine + anthranilate + 2 NAD(+) = 2-(4-dimethylaminophenyl)diazenylbenzoate + 2 NADH + 2 H(+). Functionally, quinone reductase that provides resistance to thiol-specific stress caused by electrophilic quinones. Its function is as follows. Also exhibits azoreductase activity. Catalyzes the reductive cleavage of the azo bond in aromatic azo compounds to the corresponding amines. This Coprothermobacter proteolyticus (strain ATCC 35245 / DSM 5265 / OCM 4 / BT) protein is FMN-dependent NADH:quinone oxidoreductase.